The primary structure comprises 331 residues: Adenosine deaminase (331 aa).

Zn(2+) contacts are provided by histidine 12 and histidine 14. The substrate site is built by histidine 14, aspartate 16, and glycine 170. A Zn(2+)-binding site is contributed by histidine 197. The Proton donor role is filled by glutamate 200. Aspartate 278 is a Zn(2+) binding site. Residue aspartate 279 coordinates substrate.

Belongs to the metallo-dependent hydrolases superfamily. Adenosine and AMP deaminases family. Adenosine deaminase subfamily. It depends on Zn(2+) as a cofactor.

It carries out the reaction adenosine + H2O + H(+) = inosine + NH4(+). The enzyme catalyses 2'-deoxyadenosine + H2O + H(+) = 2'-deoxyinosine + NH4(+). Functionally, catalyzes the hydrolytic deamination of adenosine and 2-deoxyadenosine. This chain is Adenosine deaminase, found in Shewanella denitrificans (strain OS217 / ATCC BAA-1090 / DSM 15013).